The following is a 126-amino-acid chain: Fluoride-specific ion channel FluC (126 aa).

4 helical membrane-spanning segments follow: residues 5-25 (ILCV…FYFG), 34-54 (YIFI…GFVL), 71-91 (VTGL…NAVF), and 100-120 (FFLN…LGIY). Na(+)-binding residues include glycine 76 and threonine 79.

This sequence belongs to the fluoride channel Fluc/FEX (TC 1.A.43) family.

The protein localises to the cell inner membrane. The enzyme catalyses fluoride(in) = fluoride(out). Its activity is regulated as follows. Na(+) is not transported, but it plays an essential structural role and its presence is essential for fluoride channel function. Its function is as follows. Fluoride-specific ion channel. Important for reducing fluoride concentration in the cell, thus reducing its toxicity. This is Fluoride-specific ion channel FluC from Campylobacter hominis (strain ATCC BAA-381 / DSM 21671 / CCUG 45161 / LMG 19568 / NCTC 13146 / CH001A).